We begin with the raw amino-acid sequence, 201 residues long: Holliday junction branch migration complex subunit RuvA (201 aa).

Residues 1–63 (MIAYLSGVVR…EDAQLLFGFP (63 aa)) form a domain I region. The tract at residues 64–142 (DADHLKLFDL…EHLAAAASGA (79 aa)) is domain II. Positions 143–150 (AGGKRPAR) are flexible linker. A domain III region spans residues 151–201 (VSSTAGHDAVDALLALGFREAQVRAAVAELLGADPEASADTLIRKALGRLR).

Belongs to the RuvA family. As to quaternary structure, homotetramer. Forms an RuvA(8)-RuvB(12)-Holliday junction (HJ) complex. HJ DNA is sandwiched between 2 RuvA tetramers; dsDNA enters through RuvA and exits via RuvB. An RuvB hexamer assembles on each DNA strand where it exits the tetramer. Each RuvB hexamer is contacted by two RuvA subunits (via domain III) on 2 adjacent RuvB subunits; this complex drives branch migration. In the full resolvosome a probable DNA-RuvA(4)-RuvB(12)-RuvC(2) complex forms which resolves the HJ.

It localises to the cytoplasm. Functionally, the RuvA-RuvB-RuvC complex processes Holliday junction (HJ) DNA during genetic recombination and DNA repair, while the RuvA-RuvB complex plays an important role in the rescue of blocked DNA replication forks via replication fork reversal (RFR). RuvA specifically binds to HJ cruciform DNA, conferring on it an open structure. The RuvB hexamer acts as an ATP-dependent pump, pulling dsDNA into and through the RuvAB complex. HJ branch migration allows RuvC to scan DNA until it finds its consensus sequence, where it cleaves and resolves the cruciform DNA. The polypeptide is Holliday junction branch migration complex subunit RuvA (Deinococcus radiodurans (strain ATCC 13939 / DSM 20539 / JCM 16871 / CCUG 27074 / LMG 4051 / NBRC 15346 / NCIMB 9279 / VKM B-1422 / R1)).